A 179-amino-acid polypeptide reads, in one-letter code: Large ribosomal subunit protein uL5 (179 aa).

It belongs to the universal ribosomal protein uL5 family. Part of the 50S ribosomal subunit; part of the 5S rRNA/L5/L18/L25 subcomplex. Contacts the 5S rRNA and the P site tRNA. Forms a bridge to the 30S subunit in the 70S ribosome.

Functionally, this is one of the proteins that bind and probably mediate the attachment of the 5S RNA into the large ribosomal subunit, where it forms part of the central protuberance. In the 70S ribosome it contacts protein S13 of the 30S subunit (bridge B1b), connecting the 2 subunits; this bridge is implicated in subunit movement. Contacts the P site tRNA; the 5S rRNA and some of its associated proteins might help stabilize positioning of ribosome-bound tRNAs. The chain is Large ribosomal subunit protein uL5 from Trichlorobacter lovleyi (strain ATCC BAA-1151 / DSM 17278 / SZ) (Geobacter lovleyi).